The chain runs to 496 residues: Angiopoietin-2 (496 aa).

The first 18 residues, 1–18, serve as a signal peptide directing secretion; sequence MWQIVFLTFGCDLVLASA. 6 N-linked (GlcNAc...) asparagine glycosylation sites follow: Asn-89, Asn-119, Asn-133, Asn-151, Asn-240, and Asn-304. Residues 159-256 adopt a coiled-coil conformation; sequence QLLQHSISTN…QQHDLMETVN (98 aa). A Fibrinogen C-terminal domain is found at 280-496; sequence TFRDCAEIFK…TTMMIRPADF (217 aa). A disulfide bridge connects residues Cys-284 and Cys-313. 4 residues coordinate Ca(2+): Asp-429, Asp-431, Cys-433, and Cys-435. 2 disulfides stabilise this stretch: Cys-433–Cys-435 and Cys-437–Cys-450.

As to quaternary structure, interacts with TEK/TIE2, competing for the same binding site as ANGPT1. Interacts with ITGA5. Interacts with SVEP1/polydom. Interacts with THBD; this interaction significantly inhibits the generation of activated PC and TAFIa/CPB2 by the thrombin/thrombomodulin complex.

It is found in the secreted. Its function is as follows. Binds to TEK/TIE2, competing for the ANGPT1 binding site, and modulating ANGPT1 signaling. Can induce tyrosine phosphorylation of TEK/TIE2 in the absence of ANGPT1. In the absence of angiogenic inducers, such as VEGF, ANGPT2-mediated loosening of cell-matrix contacts may induce endothelial cell apoptosis with consequent vascular regression. In concert with VEGF, it may facilitate endothelial cell migration and proliferation, thus serving as a permissive angiogenic signal. Involved in the regulation of lymphangiogenesis. This chain is Angiopoietin-2 (Angpt2), found in Rattus norvegicus (Rat).